The following is a 138-amino-acid chain: Putative membrane protein insertion efficiency factor (138 aa).

The interval tyrosine 71–asparagine 138 is disordered. The segment covering arginine 81–leucine 113 has biased composition (basic and acidic residues). Residues proline 123–asparagine 138 are compositionally biased toward polar residues.

The protein belongs to the UPF0161 family.

It is found in the cell membrane. In terms of biological role, could be involved in insertion of integral membrane proteins into the membrane. The chain is Putative membrane protein insertion efficiency factor from Cutibacterium acnes (strain DSM 16379 / KPA171202) (Propionibacterium acnes).